The primary structure comprises 422 residues: Nucleoside transporter 1 (422 aa).

The Cytoplasmic portion of the chain corresponds to 1–38; it reads MSTGKESSKAYADIESRGDYKDDGKKGSTLSSKQHFML. The helical transmembrane segment at 39–59 threads the bilayer; it reads SLTFILIGLSSLNVWNTALGL. Trp53 provides a ligand contact to inosine. Topologically, residues 60 to 63 are extracellular; that stretch reads NINF. A helical membrane pass occupies residues 64 to 82; sequence KYNTFQITGLVCSSIVALF. Residues 83–87 lie on the Cytoplasmic side of the membrane; it reads VEIPK. Residues 88-107 form a helical membrane-spanning segment; that stretch reads IMLPFLLGGLSILCAGFQIS. Residues 108–116 are Extracellular-facing; it reads HSFFTDTQF. The helical transmembrane segment at 117 to 139 threads the bilayer; that stretch reads DTYCLVAFIVIGVVAGLAQTIAF. Gln135 is a binding site for inosine. Over 140 to 149 the chain is Cytoplasmic; it reads NIGSTMEDNM. Residues 150–174 form a helical membrane-spanning segment; that stretch reads GGYMSAGIGISGVFIFVINLLLDQF. Topologically, residues 175–185 are extracellular; that stretch reads VSPEKHYGVNK. A helical membrane pass occupies residues 186 to 208; sequence AKLLYLYIICELCLILAIVFCVC. The Cytoplasmic portion of the chain corresponds to 209-241; the sequence is NLDLTNKNNKKDEENKENNATLSYMELFKDSYK. Residues 242-265 form a helical membrane-spanning segment; the sequence is AILTMFLVNWLTLQLFPGVGHKKW. Topologically, residues 266-274 are extracellular; it reads QESHNISDY. A helical membrane pass occupies residues 275-294; it reads NVTIIVGMFQVFDFLSRYPP. 2 residues coordinate inosine: Asp287 and Arg291. Residues 295 to 309 lie on the Cytoplasmic side of the membrane; it reads NLTHIKIFKNFTFSL. The chain crosses the membrane as a helical span at residues 310-330; the sequence is NKLLVANSLRLLFIPWFILNA. Residues 331–338 are Extracellular-facing; the sequence is CVDHPFFK. Residues 339-362 form a helical membrane-spanning segment; sequence NIVQQCVCMAMLAFTNGWFNTVPF. At 363 to 374 the chain is on the cytoplasmic side; it reads LVFVKELKKAKK. Residues 375–397 form a helical membrane-spanning segment; the sequence is KKEIEIISTFLVIAMFVGLFCGI. Over 398-422 the chain is Extracellular; it reads WTTYIYNLFNIVLPKPDLPPIDVTQ.

It belongs to the SLC29A/ENT transporter (TC 2.A.57) family.

The protein localises to the cell membrane. It catalyses the reaction inosine(in) = inosine(out). The enzyme catalyses adenosine(in) = adenosine(out). It carries out the reaction hypoxanthine(out) = hypoxanthine(in). The catalysed reaction is guanosine(in) = guanosine(out). It catalyses the reaction guanine(out) = guanine(in). The enzyme catalyses thymidine(in) = thymidine(out). It carries out the reaction uridine(out) = uridine(in). The catalysed reaction is uracil(in) = uracil(out). It catalyses the reaction thymine(out) = thymine(in). The enzyme catalyses adenine(out) = adenine(in). It carries out the reaction cytosine(out) = cytosine(in). The catalysed reaction is xanthine(out) = xanthine(in). Its activity is regulated as follows. GSK4 (5-methyl-N-[2-(2-oxo-1-azepanyl)ethyl]-2-phenyl-1,3-oxazole-4-carbox-amide) disrupts the transport activity at 500 nM. Inhibited partially by 10 uM dipyridamole. Inhibited partially by N,N'-1,3-benzothiazole-2,6-diyldi(2-furamide), 2-bromo-N-(4-[1,3]oxazolo[4,5-b]pyridin-2-ylphenyl)benzamide, 4-methyl-7-[(3,4,5-trimethoxybenzyl)oxy]-2H-chromen-2-one, 2-(1-methyl-1H-indol-3-yl)-2-oxo-N-[4-(pyrrolidin-1-ylcarbonyl)phenyl]acet amide and 2-[2-(2-methylphenyl)vinyl]-4(3H)-quinazolinone. Sodium-independent nucleoside and nucleobase transporter with a broad substrate specificity. Plays a key role in the utilization of host purine sources by P.falciparum during intraerythrocytic development enabling parasite growth in the presence of physiological concentrations of adenosine, inosine, guanine, guanosine, xanthine and hypoxanthine. Essential for parasite transition from ring to trophozoite or from trophozoite to schizont stage but not for erythrocyte invasion by merozoites. The chain is Nucleoside transporter 1 from Plasmodium falciparum (isolate 3D7).